The primary structure comprises 314 residues: Protoheme IX farnesyltransferase (314 aa).

The next 7 membrane-spanning stretches (helical) occupy residues 58–78 (LWLVVATVVGGAFSAGSASVF), 107–127 (AALVFGFVLGILSTVILYVWV), 130–150 (LSAALSVAANAFYVLVYTMLL), 173–193 (WTAVTGSLSWVPVVLFAVVFF), 227–247 (VGRQVVIYSWVMVATSLLLWP), 248–268 (VAGTGIFYPIAAGVLGAVFLL), and 294–314 (SSNLYLSLLFVAVALDPLLAG).

Belongs to the UbiA prenyltransferase family. Protoheme IX farnesyltransferase subfamily.

It localises to the cell membrane. The enzyme catalyses heme b + (2E,6E)-farnesyl diphosphate + H2O = Fe(II)-heme o + diphosphate. It functions in the pathway porphyrin-containing compound metabolism; heme O biosynthesis; heme O from protoheme: step 1/1. In terms of biological role, converts heme B (protoheme IX) to heme O by substitution of the vinyl group on carbon 2 of heme B porphyrin ring with a hydroxyethyl farnesyl side group. The chain is Protoheme IX farnesyltransferase from Nocardioides sp. (strain ATCC BAA-499 / JS614).